Here is a 406-residue protein sequence, read N- to C-terminus: Tryptophan synthase beta chain (406 aa).

Residue Lys-99 is modified to N6-(pyridoxal phosphate)lysine.

Belongs to the TrpB family. As to quaternary structure, tetramer of two alpha and two beta chains. Pyridoxal 5'-phosphate is required as a cofactor.

It catalyses the reaction (1S,2R)-1-C-(indol-3-yl)glycerol 3-phosphate + L-serine = D-glyceraldehyde 3-phosphate + L-tryptophan + H2O. Its pathway is amino-acid biosynthesis; L-tryptophan biosynthesis; L-tryptophan from chorismate: step 5/5. Its function is as follows. The beta subunit is responsible for the synthesis of L-tryptophan from indole and L-serine. This is Tryptophan synthase beta chain from Rhizobium leguminosarum bv. trifolii (strain WSM2304).